The following is a 561-amino-acid chain: uncharacterized protein (561 aa).

The next 6 membrane-spanning stretches (helical) occupy residues 27 to 49 (ILEFLAAQPLLTLALILAVGLLI), 54 to 71 (FFGISLGAAAVLFVALAL), 83 to 105 (LVYQLGLAMFVYAIGLSAGSEFF), 115 to 137 (LTLFMIGLLMLMMAVAYGIIKLF), 142 to 162 (IIGAGMFAGALSSTPGMAAMV), and 177 to 199 (VVGYSLAYPGAVIGSILVAAIGA). The RCK C-terminal domain occupies 292–373 (QQDVPIEDTD…MSEVRRFLGD (82 aa)). Helical transmembrane passes span 383–405 (LMPFAFGLVIGLAIGVIPIPLPG), 409–428 (LSLGFGGGPIVAGLILGALN), 441–463 (ASRTISTFGLAIFLAGVGTSAGV), and 478–500 (IAGGFIVTISSALVCALVCMPLF).

The protein belongs to the AAE transporter (TC 2.A.81) family.

The protein localises to the cell membrane. This is an uncharacterized protein from Corynebacterium diphtheriae (strain ATCC 700971 / NCTC 13129 / Biotype gravis).